The primary structure comprises 699 residues: 1,4-alpha-glucan-branching enzyme (699 aa).

Substrate is bound by residues 59–60 and 88–90; these read NE and WAP. W104 is a (1,4-alpha-D-glucosyl)n binding site. 115 to 118 is a substrate binding site; sequence DYGK. K140 contacts (1,4-alpha-D-glucosyl)n. Y170 is modified (phosphotyrosine). 330-333 serves as a coordination point for substrate; that stretch reads EVLR. D354 acts as the Nucleophile in catalysis. The Proton donor role is filled by E409.

It belongs to the glycosyl hydrolase 13 family. GlgB subfamily. As to quaternary structure, monomer.

The enzyme catalyses Transfers a segment of a (1-&gt;4)-alpha-D-glucan chain to a primary hydroxy group in a similar glucan chain.. The protein operates within glycan biosynthesis; glycogen biosynthesis. Functionally, glycogen-branching enzyme participates in the glycogen biosynthetic process along with glycogenin and glycogen synthase. Generates alpha-1,6-glucosidic branches from alpha-1,4-linked glucose chains, to increase solubility of the glycogen polymer. This is 1,4-alpha-glucan-branching enzyme (GBE1) from Equus caballus (Horse).